The primary structure comprises 204 residues: MLRHLLVFSLIALLAGCAGLTSREALEGQGNPAQWQIHKQQISQLDGWQINGKIGIRAPQDSGSATLFWLQRQDYYDIRLSGPLGGGAARLTGRPGDILLEVSNRGRFKAESPEALLREQLRLDLPVSNLLWWIRGLPAPDSRSRLTLDADSHLARLEQDGWQVEYQRYVEQNGYALPERLKLYGQDLEVTLVIKDWQPRQLGQ.

The first 16 residues, 1 to 16, serve as a signal peptide directing secretion; sequence MLRHLLVFSLIALLAG. Residue C17 is the site of N-palmitoyl cysteine attachment. The S-diacylglycerol cysteine moiety is linked to residue C17.

Belongs to the LolB family. Monomer.

The protein resides in the cell outer membrane. Functionally, plays a critical role in the incorporation of lipoproteins in the outer membrane after they are released by the LolA protein. This chain is Outer-membrane lipoprotein LolB, found in Ectopseudomonas mendocina (strain ymp) (Pseudomonas mendocina).